A 275-amino-acid polypeptide reads, in one-letter code: Erythroagglutinating phytohemagglutinin (275 aa).

An N-terminal signal peptide occupies residues 1–21; it reads MASSNLLSLALFLVLLTHANS. Asparagine 33 carries an N-linked (GlcNAc...) (high mannose) asparagine glycan. Asparagine 81 and asparagine 101 each carry an N-linked (GlcNAc...) asparagine glycan.

Belongs to the leguminous lectin family.

In terms of biological role, this insecticidal carbohydrate-binding lectin is toxic for the cowpea weevil. The polypeptide is Erythroagglutinating phytohemagglutinin (DLEC1) (Phaseolus vulgaris (Kidney bean)).